We begin with the raw amino-acid sequence, 620 residues long: Coenzyme F420-dependent sulfite reductase (620 aa).

Positions 6–35 (LNEIVDSGVCARCGTCTIVCPNGILTFDER) constitute a 4Fe-4S ferredoxin-type 1 domain. [4Fe-4S] cluster is bound by residues Cys-15, Cys-18, Cys-21, Cys-25, Cys-428, Cys-434, Cys-468, Cys-472, Cys-495, Cys-498, Cys-501, Cys-505, Cys-524, Cys-527, Cys-530, and Cys-534. Residue Cys-472 participates in siroheme binding. 4Fe-4S ferredoxin-type domains are found at residues 486–515 (KYPK…IRGE) and 520–544 (NYNV…VKEE).

The protein belongs to the nitrite and sulfite reductase 4Fe-4S domain family. It depends on [4Fe-4S] cluster as a cofactor. Siroheme serves as cofactor.

It catalyses the reaction 3 oxidized coenzyme F420-(gamma-L-Glu)(n) + hydrogen sulfide + 3 H2O + 2 H(+) = 3 reduced coenzyme F420-(gamma-L-Glu)(n) + sulfite. In terms of biological role, catalyzes the reduction of sulfite to sulfide using reduced F420 as the electron source. Involved in sulfite detoxification and assimilation. Cannot use NADH or NADPH. In Methanocaldococcus jannaschii (strain ATCC 43067 / DSM 2661 / JAL-1 / JCM 10045 / NBRC 100440) (Methanococcus jannaschii), this protein is Coenzyme F420-dependent sulfite reductase.